The sequence spans 530 residues: Light-independent protochlorophyllide reductase subunit B (530 aa).

Position 36 (Asp36) interacts with [4Fe-4S] cluster. The Proton donor role is filled by Asp287. Substrate is bound at residue 422 to 423 (GL). Residues 453–472 (PAVQTASSEPQPSAIETPSA) form a disordered region. Residues 454–463 (AVQTASSEPQ) show a composition bias toward polar residues.

Belongs to the ChlB/BchB/BchZ family. As to quaternary structure, protochlorophyllide reductase is composed of three subunits; BchL, BchN and BchB. Forms a heterotetramer of two BchB and two BchN subunits. [4Fe-4S] cluster is required as a cofactor.

It carries out the reaction chlorophyllide a + oxidized 2[4Fe-4S]-[ferredoxin] + 2 ADP + 2 phosphate = protochlorophyllide a + reduced 2[4Fe-4S]-[ferredoxin] + 2 ATP + 2 H2O. It functions in the pathway porphyrin-containing compound metabolism; bacteriochlorophyll biosynthesis (light-independent). Component of the dark-operative protochlorophyllide reductase (DPOR) that uses Mg-ATP and reduced ferredoxin to reduce ring D of protochlorophyllide (Pchlide) to form chlorophyllide a (Chlide). This reaction is light-independent. The NB-protein (BchN-BchB) is the catalytic component of the complex. The polypeptide is Light-independent protochlorophyllide reductase subunit B (Rhodopseudomonas palustris (strain BisB18)).